The sequence spans 64 residues: Cytochrome c oxidase subunit 5C-2 (64 aa).

The helical transmembrane segment at 15-34 threads the bilayer; the sequence is SVVKELVIGTVLGLAAGGLW.

Belongs to the cytochrome c oxidase subunit 5C family.

The protein localises to the mitochondrion inner membrane. Functionally, this protein is one of the nuclear-coded polypeptide chains of cytochrome c oxidase, the terminal oxidase in mitochondrial electron transport. The polypeptide is Cytochrome c oxidase subunit 5C-2 (COX5C2) (Helianthus annuus (Common sunflower)).